The sequence spans 320 residues: Cytochrome f (320 aa).

The signal sequence occupies residues 1–35 (MQIRNTFSSLKGEITRFISVSLMIYIITRASISNA). Positions 36, 56, 59, and 60 each coordinate heme. A helical membrane pass occupies residues 286 to 306 (VQGLLFFLASVVLAQIFLVLK).

It belongs to the cytochrome f family. As to quaternary structure, the 4 large subunits of the cytochrome b6-f complex are cytochrome b6, subunit IV (17 kDa polypeptide, petD), cytochrome f and the Rieske protein, while the 4 small subunits are PetG, PetL, PetM and PetN. The complex functions as a dimer. It depends on heme as a cofactor.

The protein localises to the plastid. Its subcellular location is the chloroplast thylakoid membrane. Component of the cytochrome b6-f complex, which mediates electron transfer between photosystem II (PSII) and photosystem I (PSI), cyclic electron flow around PSI, and state transitions. In Citrus sinensis (Sweet orange), this protein is Cytochrome f.